A 101-amino-acid chain; its full sequence is Large ribosomal subunit protein uL23 (101 aa).

It belongs to the universal ribosomal protein uL23 family. As to quaternary structure, part of the 50S ribosomal subunit. Contacts protein L29, and trigger factor when it is bound to the ribosome.

Its function is as follows. One of the early assembly proteins it binds 23S rRNA. One of the proteins that surrounds the polypeptide exit tunnel on the outside of the ribosome. Forms the main docking site for trigger factor binding to the ribosome. The polypeptide is Large ribosomal subunit protein uL23 (Corynebacterium diphtheriae (strain ATCC 700971 / NCTC 13129 / Biotype gravis)).